Reading from the N-terminus, the 322-residue chain is tRNA U34 carboxymethyltransferase (322 aa).

Carboxy-S-adenosyl-L-methionine contacts are provided by residues Lys92, Trp106, Lys111, Gly131, 153-155 (DPT), 181-182 (VE), Met196, Tyr200, and Arg315.

Belongs to the class I-like SAM-binding methyltransferase superfamily. CmoB family. Homotetramer.

It carries out the reaction carboxy-S-adenosyl-L-methionine + 5-hydroxyuridine(34) in tRNA = 5-carboxymethoxyuridine(34) in tRNA + S-adenosyl-L-homocysteine + H(+). Functionally, catalyzes carboxymethyl transfer from carboxy-S-adenosyl-L-methionine (Cx-SAM) to 5-hydroxyuridine (ho5U) to form 5-carboxymethoxyuridine (cmo5U) at position 34 in tRNAs. The sequence is that of tRNA U34 carboxymethyltransferase from Colwellia psychrerythraea (strain 34H / ATCC BAA-681) (Vibrio psychroerythus).